The following is a 558-amino-acid chain: Urocanate hydratase (558 aa).

Residues 53–54 (GG), Gln131, 177–179 (GMG), Glu197, Arg202, 243–244 (NA), 264–268 (QTSAH), 274–275 (YL), and Tyr323 contribute to the NAD(+) site. The active site involves Cys411. Gly493 is a binding site for NAD(+).

Belongs to the urocanase family. Requires NAD(+) as cofactor.

The protein localises to the cytoplasm. It carries out the reaction 4-imidazolone-5-propanoate = trans-urocanate + H2O. Its pathway is amino-acid degradation; L-histidine degradation into L-glutamate; N-formimidoyl-L-glutamate from L-histidine: step 2/3. In terms of biological role, catalyzes the conversion of urocanate to 4-imidazolone-5-propionate. The protein is Urocanate hydratase of Idiomarina loihiensis (strain ATCC BAA-735 / DSM 15497 / L2-TR).